The following is a 187-amino-acid chain: Ribosome-recycling factor (187 aa).

Belongs to the RRF family.

It is found in the cytoplasm. Responsible for the release of ribosomes from messenger RNA at the termination of protein biosynthesis. May increase the efficiency of translation by recycling ribosomes from one round of translation to another. The protein is Ribosome-recycling factor of Lactiplantibacillus plantarum (strain ATCC BAA-793 / NCIMB 8826 / WCFS1) (Lactobacillus plantarum).